A 312-amino-acid polypeptide reads, in one-letter code: Malate dehydrogenase (312 aa).

Residues 12–17 (GAGFTG) and aspartate 36 contribute to the NAD(+) site. 2 residues coordinate substrate: arginine 87 and arginine 93. NAD(+) contacts are provided by residues asparagine 100 and 123–125 (LTN). Position 125 (asparagine 125) interacts with substrate. Residue serine 149 is modified to Phosphoserine. Arginine 156 lines the substrate pocket. The active-site Proton acceptor is histidine 180.

This sequence belongs to the LDH/MDH superfamily. MDH type 3 family.

The enzyme catalyses (S)-malate + NAD(+) = oxaloacetate + NADH + H(+). Its function is as follows. Catalyzes the reversible oxidation of malate to oxaloacetate. The chain is Malate dehydrogenase from Geobacillus kaustophilus (strain HTA426).